Consider the following 356-residue polypeptide: tRNA N6-adenosine threonylcarbamoyltransferase (356 aa).

Residues His115 and His119 each coordinate Fe cation. Substrate contacts are provided by residues 138–142, Asp171, Gly184, and Asn283; that span reads LVSGG. Asp311 contacts Fe cation.

Belongs to the KAE1 / TsaD family. Requires Fe(2+) as cofactor.

The protein localises to the cytoplasm. It carries out the reaction L-threonylcarbamoyladenylate + adenosine(37) in tRNA = N(6)-L-threonylcarbamoyladenosine(37) in tRNA + AMP + H(+). Functionally, required for the formation of a threonylcarbamoyl group on adenosine at position 37 (t(6)A37) in tRNAs that read codons beginning with adenine. Is involved in the transfer of the threonylcarbamoyl moiety of threonylcarbamoyl-AMP (TC-AMP) to the N6 group of A37, together with TsaE and TsaB. TsaD likely plays a direct catalytic role in this reaction. This Prochlorococcus marinus (strain SARG / CCMP1375 / SS120) protein is tRNA N6-adenosine threonylcarbamoyltransferase.